Here is a 1204-residue protein sequence, read N- to C-terminus: Erythroid differentiation-related factor 1 (1204 aa).

4 disordered regions span residues Met1–Ser30, Gln220–Gln264, Pro483–Ser527, and Lys586–Pro613. Composition is skewed to low complexity over residues Ala9–Ser30, Ser223–Glu241, and Ser253–Ser263. Residues Asn496–Glu513 are compositionally biased toward acidic residues. TPR repeat units follow at residues Cys693–Asn726 and Asp920–Lys953.

Its subcellular location is the nucleus. Transcription factor involved in erythroid differentiation. Involved in transcriptional activation of the globin gene. This Pongo abelii (Sumatran orangutan) protein is Erythroid differentiation-related factor 1 (EDRF1).